The following is a 160-amino-acid chain: Cytochrome b6-f complex subunit 4 (160 aa).

3 consecutive transmembrane segments (helical) span residues 36–56 (LLYI…GLAV), 95–115 (LLGI…PFIE), and 128–148 (VAMT…IGAA).

It belongs to the cytochrome b family. PetD subfamily. The 4 large subunits of the cytochrome b6-f complex are cytochrome b6, subunit IV (17 kDa polypeptide, PetD), cytochrome f and the Rieske protein, while the 4 small subunits are PetG, PetL, PetM and PetN. The complex functions as a dimer.

It is found in the cellular thylakoid membrane. Its function is as follows. Component of the cytochrome b6-f complex, which mediates electron transfer between photosystem II (PSII) and photosystem I (PSI), cyclic electron flow around PSI, and state transitions. This is Cytochrome b6-f complex subunit 4 from Synechococcus sp. (strain CC9902).